Reading from the N-terminus, the 178-residue chain is Small ribosomal subunit protein uS4 (178 aa).

One can recognise an S4 RNA-binding domain in the interval 104 to 166 (RRLQTLVYRK…PNSPMALENH (63 aa)).

Belongs to the universal ribosomal protein uS4 family. In terms of assembly, part of the 30S ribosomal subunit. Contacts protein S5. The interaction surface between S4 and S5 is involved in control of translational fidelity.

One of the primary rRNA binding proteins, it binds directly to 16S rRNA where it nucleates assembly of the body of the 30S subunit. In terms of biological role, with S5 and S12 plays an important role in translational accuracy. The polypeptide is Small ribosomal subunit protein uS4 (Methanococcus vannielii (strain ATCC 35089 / DSM 1224 / JCM 13029 / OCM 148 / SB)).